Consider the following 322-residue polypeptide: tRNA pseudouridine synthase B (322 aa).

A compositionally biased stretch (basic and acidic residues) spans 1–11 (MRPPRTTELDR). The tract at residues 1-22 (MRPPRTTELDRPMTTAASQRPR) is disordered. Residue aspartate 65 is the Nucleophile of the active site.

This sequence belongs to the pseudouridine synthase TruB family. Type 1 subfamily.

It catalyses the reaction uridine(55) in tRNA = pseudouridine(55) in tRNA. Its function is as follows. Responsible for synthesis of pseudouridine from uracil-55 in the psi GC loop of transfer RNAs. This is tRNA pseudouridine synthase B from Burkholderia lata (strain ATCC 17760 / DSM 23089 / LMG 22485 / NCIMB 9086 / R18194 / 383).